The primary structure comprises 89 residues: Small ribosomal subunit protein uS15 (89 aa).

The tract at residues 1 to 23 (MALTKERTASVVQQYGSGEKDTG) is disordered.

Belongs to the universal ribosomal protein uS15 family. In terms of assembly, part of the 30S ribosomal subunit. Forms a bridge to the 50S subunit in the 70S ribosome, contacting the 23S rRNA.

In terms of biological role, one of the primary rRNA binding proteins, it binds directly to 16S rRNA where it helps nucleate assembly of the platform of the 30S subunit by binding and bridging several RNA helices of the 16S rRNA. Its function is as follows. Forms an intersubunit bridge (bridge B4) with the 23S rRNA of the 50S subunit in the ribosome. This Treponema pallidum (strain Nichols) protein is Small ribosomal subunit protein uS15.